Reading from the N-terminus, the 468-residue chain is UDP-N-acetylmuramate--L-alanine ligase (468 aa).

114-120 (GTHGKTT) provides a ligand contact to ATP.

The protein belongs to the MurCDEF family.

Its subcellular location is the cytoplasm. It catalyses the reaction UDP-N-acetyl-alpha-D-muramate + L-alanine + ATP = UDP-N-acetyl-alpha-D-muramoyl-L-alanine + ADP + phosphate + H(+). It functions in the pathway cell wall biogenesis; peptidoglycan biosynthesis. Functionally, cell wall formation. In Methylocella silvestris (strain DSM 15510 / CIP 108128 / LMG 27833 / NCIMB 13906 / BL2), this protein is UDP-N-acetylmuramate--L-alanine ligase.